The sequence spans 464 residues: UDP-N-acetylmuramate--L-alanine ligase (464 aa).

123–129 (GTHGKTT) contacts ATP.

This sequence belongs to the MurCDEF family.

Its subcellular location is the cytoplasm. The catalysed reaction is UDP-N-acetyl-alpha-D-muramate + L-alanine + ATP = UDP-N-acetyl-alpha-D-muramoyl-L-alanine + ADP + phosphate + H(+). It functions in the pathway cell wall biogenesis; peptidoglycan biosynthesis. Its function is as follows. Cell wall formation. This chain is UDP-N-acetylmuramate--L-alanine ligase, found in Carboxydothermus hydrogenoformans (strain ATCC BAA-161 / DSM 6008 / Z-2901).